The following is a 332-amino-acid chain: Biotin synthase (332 aa).

Positions 53–282 (YFGKKVKLNM…TKEIRISGGR (230 aa)) constitute a Radical SAM core domain. Positions 71, 75, and 78 each coordinate [4Fe-4S] cluster. [2Fe-2S] cluster is bound by residues C115, C147, C207, and R277.

Belongs to the radical SAM superfamily. Biotin synthase family. Homodimer. Requires [4Fe-4S] cluster as cofactor. [2Fe-2S] cluster serves as cofactor.

It catalyses the reaction (4R,5S)-dethiobiotin + (sulfur carrier)-SH + 2 reduced [2Fe-2S]-[ferredoxin] + 2 S-adenosyl-L-methionine = (sulfur carrier)-H + biotin + 2 5'-deoxyadenosine + 2 L-methionine + 2 oxidized [2Fe-2S]-[ferredoxin]. It participates in cofactor biosynthesis; biotin biosynthesis; biotin from 7,8-diaminononanoate: step 2/2. Its function is as follows. Catalyzes the conversion of dethiobiotin (DTB) to biotin by the insertion of a sulfur atom into dethiobiotin via a radical-based mechanism. The chain is Biotin synthase from Bacillus anthracis.